A 148-amino-acid polypeptide reads, in one-letter code: Large ribosomal subunit protein uL15 (148 aa).

A disordered region spans residues 1–51 (MNLSNLKPAEGSTKTRKRIGRGAGSGLGGTSTRGHKGAKSRSGYSKKVGFE). The segment covering 21 to 31 (RGAGSGLGGTS) has biased composition (gly residues).

Belongs to the universal ribosomal protein uL15 family. Part of the 50S ribosomal subunit.

Binds to the 23S rRNA. The protein is Large ribosomal subunit protein uL15 of Bacteroides thetaiotaomicron (strain ATCC 29148 / DSM 2079 / JCM 5827 / CCUG 10774 / NCTC 10582 / VPI-5482 / E50).